A 485-amino-acid chain; its full sequence is Aspartyl/glutamyl-tRNA(Asn/Gln) amidotransferase subunit B (485 aa).

Belongs to the GatB/GatE family. GatB subfamily. Heterotrimer of A, B and C subunits.

The catalysed reaction is L-glutamyl-tRNA(Gln) + L-glutamine + ATP + H2O = L-glutaminyl-tRNA(Gln) + L-glutamate + ADP + phosphate + H(+). It carries out the reaction L-aspartyl-tRNA(Asn) + L-glutamine + ATP + H2O = L-asparaginyl-tRNA(Asn) + L-glutamate + ADP + phosphate + 2 H(+). Its function is as follows. Allows the formation of correctly charged Asn-tRNA(Asn) or Gln-tRNA(Gln) through the transamidation of misacylated Asp-tRNA(Asn) or Glu-tRNA(Gln) in organisms which lack either or both of asparaginyl-tRNA or glutaminyl-tRNA synthetases. The reaction takes place in the presence of glutamine and ATP through an activated phospho-Asp-tRNA(Asn) or phospho-Glu-tRNA(Gln). This is Aspartyl/glutamyl-tRNA(Asn/Gln) amidotransferase subunit B from Anaplasma marginale (strain Florida).